The primary structure comprises 517 residues: Crotonobetaine/carnitine--CoA ligase (517 aa).

The protein belongs to the ATP-dependent AMP-binding enzyme family.

The catalysed reaction is 4-(trimethylamino)butanoate + ATP + CoA = 4-(trimethylamino)butanoyl-CoA + AMP + diphosphate. It catalyses the reaction crotonobetaine + ATP + CoA = crotonobetainyl-CoA + AMP + diphosphate. The enzyme catalyses (R)-carnitine + ATP + CoA = (R)-carnitinyl-CoA + AMP + diphosphate. Its pathway is amine and polyamine metabolism; carnitine metabolism. Catalyzes the transfer of CoA to carnitine, generating the initial carnitinyl-CoA needed for the CaiB reaction cycle. Also has activity toward crotonobetaine and gamma-butyrobetaine. This is Crotonobetaine/carnitine--CoA ligase from Shigella dysenteriae serotype 1 (strain Sd197).